The sequence spans 255 residues: Ribonuclease HII (255 aa).

The RNase H type-2 domain occupies 72 to 255 (RLIAGIDEVG…RTFAPIKDMI (184 aa)). A divalent metal cation is bound by residues aspartate 78, glutamate 79, and aspartate 170.

This sequence belongs to the RNase HII family. Requires Mn(2+) as cofactor. Mg(2+) serves as cofactor.

The protein resides in the cytoplasm. It carries out the reaction Endonucleolytic cleavage to 5'-phosphomonoester.. Its function is as follows. Endonuclease that specifically degrades the RNA of RNA-DNA hybrids. The sequence is that of Ribonuclease HII from Enterococcus faecalis (strain ATCC 700802 / V583).